The sequence spans 358 residues: Chondroadherin (358 aa).

The N-terminal stretch at 1–20 (MARALLFSLVFLAILLPALA) is a signal peptide. The 30-residue stretch at 21 to 50 (ACPQNCHCHGDLQHVICDKVGLQKIPKVSE) folds into the LRRNT domain. A disulfide bridge connects residues cysteine 22 and cysteine 37. LRR repeat units follow at residues 51-72 (TTKL…SFRT), 75-96 (NLVS…AFRG), 99-120 (QLIY…AFDD), 123-144 (ELTY…LLSP), 147-168 (NLFI…AFQG), 171-192 (DLRW…SLDD), 195-216 (NLAK…ALSK), 219-240 (VVEE…AFQS), 244-265 (YLET…AFSG), and 268-289 (TLKH…FPFD). Serine 143 carries O-linked (GalNAc...) serine glycosylation. The region spanning 299-347 (NPWKCTCQLRGLRRWLEAKASRPDATCSSPAKFKGQRIRDTDALRSCKS) is the LRRCT domain. 2 disulfide bridges follow: cysteine 303–cysteine 345 and cysteine 305–cysteine 325. Residues 322–358 (DATCSSPAKFKGQRIRDTDALRSCKSPTKRSKKAGRH) are disordered. A compositionally biased stretch (basic residues) spans 348–358 (PTKRSKKAGRH).

It belongs to the small leucine-rich proteoglycan (SLRP) family. SLRP class IV subfamily. In terms of assembly, mostly monomeric. Interacts with collagen type II. Cartilage.

The protein resides in the secreted. Its subcellular location is the extracellular space. It is found in the extracellular matrix. Promotes attachment of chondrocytes, fibroblasts, and osteoblasts. This binding is mediated (at least for chondrocytes and fibroblasts) by the integrin alpha(2)beta(1). May play an important role in the regulation of chondrocyte growth and proliferation. The chain is Chondroadherin (Chad) from Mus musculus (Mouse).